A 217-amino-acid polypeptide reads, in one-letter code: MNLVLMGLPGAGKGTQAQKIVENFPIPHISTGDIFRAAMKNETPMGIEAKKYIDKGELVPDEVTNGIVKERLAQDDTKDGFMLDGFPRNLNQAAALDEMLAESNRHLDAVINIHVEPDVLVERLSGRFICRNCGATYHKLYNAPKVEGTCDVCGHHEFYQRDDDKPETVKNRLDVNIKLNTPLVDYYQKKGVLHEINGEQDIDKVYEDIKKVLTNLN.

10-15 is a binding site for ATP; it reads GAGKGT. An NMP region spans residues 30–59; that stretch reads STGDIFRAAMKNETPMGIEAKKYIDKGELV. Residues Thr31, Arg36, 57 to 59, 85 to 88, and Gln92 each bind AMP; these read ELV and GFPR. The tract at residues 126-164 is LID; sequence GRFICRNCGATYHKLYNAPKVEGTCDVCGHHEFYQRDDD. Residue Arg127 coordinates ATP. Zn(2+)-binding residues include Cys130 and Cys133. Residue 136 to 137 coordinates ATP; sequence TY. Cys150 and Cys153 together coordinate Zn(2+). Residues Arg161 and Arg172 each contribute to the AMP site. ATP is bound at residue Gln200.

The protein belongs to the adenylate kinase family. Monomer.

It is found in the cytoplasm. The catalysed reaction is AMP + ATP = 2 ADP. Its pathway is purine metabolism; AMP biosynthesis via salvage pathway; AMP from ADP: step 1/1. Catalyzes the reversible transfer of the terminal phosphate group between ATP and AMP. Plays an important role in cellular energy homeostasis and in adenine nucleotide metabolism. This Limosilactobacillus reuteri subsp. reuteri (strain JCM 1112) (Lactobacillus reuteri) protein is Adenylate kinase.